We begin with the raw amino-acid sequence, 176 residues long: RNA pyrophosphohydrolase (176 aa).

The region spanning 6–149 (GYRPNVGIII…KRNVYEMALT (144 aa)) is the Nudix hydrolase domain. A Nudix box motif is present at residues 38–59 (GGIKPGESPEAAMYRELMEEVG).

Belongs to the Nudix hydrolase family. RppH subfamily. A divalent metal cation serves as cofactor.

Its function is as follows. Accelerates the degradation of transcripts by removing pyrophosphate from the 5'-end of triphosphorylated RNA, leading to a more labile monophosphorylated state that can stimulate subsequent ribonuclease cleavage. The protein is RNA pyrophosphohydrolase of Laribacter hongkongensis (strain HLHK9).